The sequence spans 510 residues: ATP synthase subunit alpha (510 aa).

Residue 169 to 176 (GDRQTGKT) participates in ATP binding.

It belongs to the ATPase alpha/beta chains family. F-type ATPases have 2 components, CF(1) - the catalytic core - and CF(0) - the membrane proton channel. CF(1) has five subunits: alpha(3), beta(3), gamma(1), delta(1), epsilon(1). CF(0) has four main subunits: a(1), b(1), b'(1) and c(9-12).

The protein resides in the cell inner membrane. The enzyme catalyses ATP + H2O + 4 H(+)(in) = ADP + phosphate + 5 H(+)(out). Its function is as follows. Produces ATP from ADP in the presence of a proton gradient across the membrane. The alpha chain is a regulatory subunit. In Rhodopseudomonas palustris (strain BisA53), this protein is ATP synthase subunit alpha.